The sequence spans 338 residues: MEMO1 family protein MHO1 (338 aa).

This sequence belongs to the MEMO1 family.

The protein resides in the cytoplasm. It is found in the nucleus. In terms of biological role, plays a role in haploid invasive growth under conditions of nutrient insufficiency, suggesting that the function of the MEMO1 family in cell motility/invasion is conserved across species. This is MEMO1 family protein MHO1 from Saccharomyces cerevisiae (strain ATCC 204508 / S288c) (Baker's yeast).